We begin with the raw amino-acid sequence, 115 residues long: Hydrogenase maturation factor HypA (115 aa).

His2 is a Ni(2+) binding site. The Zn(2+) site is built by Cys73, Cys76, Cys89, and Cys92.

This sequence belongs to the HypA/HybF family.

Its function is as follows. Involved in the maturation of [NiFe] hydrogenases. Required for nickel insertion into the metal center of the hydrogenase. The chain is Hydrogenase maturation factor HypA from Aquifex aeolicus (strain VF5).